Reading from the N-terminus, the 192-residue chain is Early nodulin-like protein 7 (192 aa).

Residues 1-27 (MMMMMMRSTCNLTLMLCICALVVASMA) form the signal peptide. The Phytocyanin domain maps to 32–134 (RDFKVGDEFG…GQRLIVEVMH (103 aa)). 3 N-linked (GlcNAc...) asparagine glycosylation sites follow: Asn48, Asn89, and Asn101. A disulfide bridge links Cys88 with Cys122. Ser166 carries the GPI-anchor amidated serine lipid modification. Residues 167-192 (AASSLPTACLLIPLFLTIASFRFISY) constitute a propeptide, removed in mature form.

This sequence belongs to the early nodulin-like (ENODL) family. In terms of tissue distribution, mostly expressed in flowers, and, to a lower extent, in seeds, but barely in seedlings, stems, leaves and roots.

It is found in the cell membrane. Its function is as follows. May act as a carbohydrate transporter. The polypeptide is Early nodulin-like protein 7 (Arabidopsis thaliana (Mouse-ear cress)).